We begin with the raw amino-acid sequence, 459 residues long: DnaJ protein homolog XDJ1 (459 aa).

The J domain maps to Gly7–Asp79. The segment at Gly146–Lys240 adopts a CR-type zinc-finger fold. 4 CXXCXGXG motif repeats span residues Cys159–Gly166, Cys181–Gly188, Cys208–Gly215, and Cys228–Gly235.

It is found in the mitochondrion outer membrane. The sequence is that of DnaJ protein homolog XDJ1 (XDJ1) from Saccharomyces cerevisiae (strain ATCC 204508 / S288c) (Baker's yeast).